A 595-amino-acid chain; its full sequence is DNA ligase (595 aa).

NAD(+) is bound by residues 32–36 (DEKYD), 81–82 (SL), and E113. The N6-AMP-lysine intermediate role is filled by K115. NAD(+)-binding residues include R136, E178, K296, and K320. The Zn(2+) site is built by C414, C417, C432, and C438.

It belongs to the NAD-dependent DNA ligase family. LigA subfamily. Mg(2+) is required as a cofactor. It depends on Mn(2+) as a cofactor.

It catalyses the reaction NAD(+) + (deoxyribonucleotide)n-3'-hydroxyl + 5'-phospho-(deoxyribonucleotide)m = (deoxyribonucleotide)n+m + AMP + beta-nicotinamide D-nucleotide.. Functionally, DNA ligase that catalyzes the formation of phosphodiester linkages between 5'-phosphoryl and 3'-hydroxyl groups in double-stranded DNA using NAD as a coenzyme and as the energy source for the reaction. It is essential for DNA replication and repair of damaged DNA. This chain is DNA ligase, found in Blochmanniella pennsylvanica (strain BPEN).